The primary structure comprises 288 residues: ATP synthase gamma chain (288 aa).

The protein belongs to the ATPase gamma chain family. F-type ATPases have 2 components, CF(1) - the catalytic core - and CF(0) - the membrane proton channel. CF(1) has five subunits: alpha(3), beta(3), gamma(1), delta(1), epsilon(1). CF(0) has three main subunits: a, b and c.

Its subcellular location is the cell inner membrane. Its function is as follows. Produces ATP from ADP in the presence of a proton gradient across the membrane. The gamma chain is believed to be important in regulating ATPase activity and the flow of protons through the CF(0) complex. This is ATP synthase gamma chain from Chromobacterium violaceum (strain ATCC 12472 / DSM 30191 / JCM 1249 / CCUG 213 / NBRC 12614 / NCIMB 9131 / NCTC 9757 / MK).